The sequence spans 380 residues: Cytochrome b (380 aa).

A run of 4 helical transmembrane segments spans residues 33-53 (FGSLLGLCLAIQLLTGLFLAM), 77-98 (WLIRNMHANGASFFFICIYLHI), 113-133 (WNVGVVLLLLVMMTAFVGYVL), and 178-198 (FFAFHFLLPFVIAAATLLHLL). Residues H83 and H97 each coordinate heme b. Residues H182 and H196 each contribute to the heme b site. H201 contacts a ubiquinone. Transmembrane regions (helical) follow at residues 226-246 (YKDLLGFIVLFLALASLALFS), 288-308 (LGGVLALLASILILMLVPILH), 320-340 (FSQIIFWTLVADVAILTWIGG), and 347-367 (YIIIGQIASALYFLIFLVFFP).

This sequence belongs to the cytochrome b family. The cytochrome bc1 complex contains 3 respiratory subunits (MT-CYB, CYC1 and UQCRFS1), 2 core proteins (UQCRC1 and UQCRC2) and probably 6 low-molecular weight proteins. Heme b is required as a cofactor.

It localises to the mitochondrion inner membrane. Its function is as follows. Component of the ubiquinol-cytochrome c reductase complex (complex III or cytochrome b-c1 complex) that is part of the mitochondrial respiratory chain. The b-c1 complex mediates electron transfer from ubiquinol to cytochrome c. Contributes to the generation of a proton gradient across the mitochondrial membrane that is then used for ATP synthesis. The protein is Cytochrome b (mt-cyb) of Apogon semilineatus (Half-lined cardinal).